The primary structure comprises 309 residues: Elongator complex protein 5 (309 aa).

A phosphoserine mark is found at Ser-3 and Ser-4.

It belongs to the ELP5 family. Component of the elongator complex, which consists of ELP1/IKI3, ELP2, ELP3, ELP4, ELP5/IKI1 and ELP6. The elongator complex is composed of two copies of the Elp123 subcomplex (composed of ELP1/IKI3, ELP2 and ELP3) and two copies of the Elp456 subcomplex (composed of ELP4, ELP5/IKI1 and ELP6). The Elp123 subcomplex forms a two-lobed scaffold, which binds the Elp456 subcomplex asymmetrically. In each lobe, ELP2 is tightly sandwiched between ELP1/IKI3 and ELP3. The Elp123 subcomplex binds tRNA through ELP1/IKI3 and ELP3 and can bind 2 tRNAs simultaneously. tRNA-binding by the Elp123 subcomplex induces conformational rearrangements which precisely position the targeted anticodon base in the active site. The Elp456 subcomplex binds tRNA and has ATPase activity. Interacts with KTI11/DPH3.

The protein localises to the cytoplasm. The protein resides in the nucleus. The protein operates within tRNA modification; 5-methoxycarbonylmethyl-2-thiouridine-tRNA biosynthesis. In terms of biological role, component of the elongator complex which is required for multiple tRNA modifications, including mcm5U (5-methoxycarbonylmethyl uridine), mcm5s2U (5-methoxycarbonylmethyl-2-thiouridine), and ncm5U (5-carbamoylmethyl uridine). The elongator complex catalyzes formation of carboxymethyluridine in the wobble base at position 34 in tRNAs. It functions as a gamma-toxin target (TOT); disruption of the complex confers resistance to Kluyveromyces lactis toxin zymocin (pGKL1 killer toxin). May also be involved in sensitivity to Pichia inositovora toxin. The sequence is that of Elongator complex protein 5 (IKI1) from Saccharomyces cerevisiae (strain ATCC 204508 / S288c) (Baker's yeast).